The following is a 367-amino-acid chain: GPN-loop GTPase 1 (367 aa).

GTP contacts are provided by residues 15 to 22 (GMAGSGKT) and 18 to 23 (GSGKTT). A Gly-Pro-Asn (GPN)-loop; involved in dimer interface motif is present at residues 75–77 (GPN). A GTP-binding site is contributed by 178–181 (NKCD). A coiled-coil region spans residues 247 to 290 (EGMDDFLEAVKAKVKEYEEEYVPEMERMKEIQRQTKERQKEAQL). The disordered stretch occupies residues 306–332 (VGLTVSDAEDEYNGELVDPDEDDGLTA). S311 carries the post-translational modification Phosphoserine. Acidic residues predominate over residues 312 to 332 (DAEDEYNGELVDPDEDDGLTA).

The protein belongs to the GPN-loop GTPase family. Heterodimers with gpn2 or fet5/gpn3. Binds to RNA polymerase II (RNAPII).

It localises to the cytoplasm. In terms of biological role, small GTPase required for proper nuclear import of RNA polymerase II (RNAPII). May act at an RNAP assembly step prior to nuclear import. This chain is GPN-loop GTPase 1, found in Schizosaccharomyces pombe (strain 972 / ATCC 24843) (Fission yeast).